The primary structure comprises 355 residues: Tetraacyldisaccharide 4'-kinase (355 aa).

64–71 (YVGGTGKT) lines the ATP pocket. Positions 206 to 226 (NRAPQSSATPTAASGQGPRRA) are disordered. Over residues 208–222 (APQSSATPTAASGQG) the composition is skewed to low complexity.

This sequence belongs to the LpxK family.

It carries out the reaction a lipid A disaccharide + ATP = a lipid IVA + ADP + H(+). Its pathway is glycolipid biosynthesis; lipid IV(A) biosynthesis; lipid IV(A) from (3R)-3-hydroxytetradecanoyl-[acyl-carrier-protein] and UDP-N-acetyl-alpha-D-glucosamine: step 6/6. In terms of biological role, transfers the gamma-phosphate of ATP to the 4'-position of a tetraacyldisaccharide 1-phosphate intermediate (termed DS-1-P) to form tetraacyldisaccharide 1,4'-bis-phosphate (lipid IVA). This chain is Tetraacyldisaccharide 4'-kinase, found in Bordetella petrii (strain ATCC BAA-461 / DSM 12804 / CCUG 43448).